A 454-amino-acid polypeptide reads, in one-letter code: Glutamyl-tRNA reductase (454 aa).

Substrate contacts are provided by residues 49–52, S109, 114–116, and Q120; these read TCNR and ETQ. The Nucleophile role is filled by C50. 189 to 194 is a binding site for NADP(+); sequence GAGKMG.

This sequence belongs to the glutamyl-tRNA reductase family. Homodimer.

It catalyses the reaction (S)-4-amino-5-oxopentanoate + tRNA(Glu) + NADP(+) = L-glutamyl-tRNA(Glu) + NADPH + H(+). It participates in porphyrin-containing compound metabolism; protoporphyrin-IX biosynthesis; 5-aminolevulinate from L-glutamyl-tRNA(Glu): step 1/2. Catalyzes the NADPH-dependent reduction of glutamyl-tRNA(Glu) to glutamate 1-semialdehyde (GSA). This chain is Glutamyl-tRNA reductase, found in Geobacillus kaustophilus (strain HTA426).